The primary structure comprises 403 residues: Peptidyl-prolyl cis-trans isomerase FKBP8 (403 aa).

Residues 26-54 form a disordered region; the sequence is VLDGVDDAEEEDDLSGLPPLEDMGQPTVE. A compositionally biased stretch (acidic residues) spans 28 to 39; sequence DGVDDAEEEDDL. The PPIase FKBP-type domain maps to 110–195; that stretch reads GQVVTVHLQM…CLEVTLKTAE (86 aa). The stretch at 212-245 is one TPR 1 repeat; that stretch reads ANRKRECGNAHYQRADFVLAANSYDLAIKAITSN. Residues Lys240, Lys262, Lys264, and Lys275 each participate in a glycyl lysine isopeptide (Lys-Gly) (interchain with G-Cter in ubiquitin) cross-link. TPR repeat units lie at residues 263–296 and 297–330; these read VKCLNNLAASQLKLDHYRAALRSCSQVLEHQPDN and IKALFRKGKVLAQQGEYSEAIPILRAALKLEPSN. Position 287 is a phosphoserine (Ser287). Residues Lys298, Lys305, Lys325, Lys331, Lys339, Lys342, and Lys343 each participate in a glycyl lysine isopeptide (Lys-Gly) (interchain with G-Cter in ubiquitin) cross-link. Residues 381–401 form a helical membrane-spanning segment; that stretch reads WLFGATAVALGGVALSVVIAA.

Homomultimers or heteromultimers (Potential). Forms heterodimer with calmodulin. When activated by calmodulin and calcium, interacts with the BH4 domain of BCL2 and weakly with BCLX isoform Bcl-X(L). Does not bind and inhibit calcineurin. Interacts with ZFYVE27; may negatively regulate ZFYVE27 phosphorylation. Ca(2+) is required as a cofactor. In terms of processing, ubiquitinated by PRKN during mitophagy, leading to its degradation and enhancement of mitophagy. Deubiquitinated by USP30.

It localises to the mitochondrion membrane. It carries out the reaction [protein]-peptidylproline (omega=180) = [protein]-peptidylproline (omega=0). Constitutively inactive PPiase, which becomes active when bound to calmodulin and calcium. Seems to act as a chaperone for BCL2, targets it to the mitochondria and modulates its phosphorylation state. The BCL2/FKBP8/calmodulin/calcium complex probably interferes with the binding of BCL2 to its targets. The active form of FKBP8 may therefore play a role in the regulation of apoptosis. In Rattus norvegicus (Rat), this protein is Peptidyl-prolyl cis-trans isomerase FKBP8 (Fkbp8).